The following is a 250-amino-acid chain: Glycerol uptake facilitator protein-like 5 (250 aa).

Transmembrane regions (helical) follow at residues 12-32 (EFFG…NAFL) and 46-66 (GGWL…AMMF). The NPA 1 signature appears at 75 to 77 (NPA). 3 helical membrane-spanning segments follow: residues 85 to 105 (IGIF…LGAI), 142 to 162 (LNGF…AMGL), and 172 to 192 (IDIA…SLGG). An NPA 2 motif is present at residues 199–201 (NPA). Residues 230–250 (VVAPIVGAVIGIWIYKIFFGL) form a helical membrane-spanning segment.

It belongs to the MIP/aquaporin (TC 1.A.8) family.

It localises to the cell membrane. In terms of biological role, probable transporter that facilitates the transmembrane diffusion of an unknown substrate. Is not permeable to water, dihydroxyacetone, glycerol, urea, H(2)O(2) and D/L-lactic acid. The polypeptide is Glycerol uptake facilitator protein-like 5 (Lactiplantibacillus plantarum (strain ATCC BAA-793 / NCIMB 8826 / WCFS1) (Lactobacillus plantarum)).